A 240-amino-acid polypeptide reads, in one-letter code: 4-hydroxy-tetrahydrodipicolinate reductase (240 aa).

NAD(+)-binding positions include 79–81 (ATT) and 103–106 (SANM). The active-site Proton donor/acceptor is His135. His136 contacts (S)-2,3,4,5-tetrahydrodipicolinate. Lys139 serves as the catalytic Proton donor. Residue 145 to 146 (GT) participates in (S)-2,3,4,5-tetrahydrodipicolinate binding.

Belongs to the DapB family.

It localises to the cytoplasm. The catalysed reaction is (S)-2,3,4,5-tetrahydrodipicolinate + NAD(+) + H2O = (2S,4S)-4-hydroxy-2,3,4,5-tetrahydrodipicolinate + NADH + H(+). It carries out the reaction (S)-2,3,4,5-tetrahydrodipicolinate + NADP(+) + H2O = (2S,4S)-4-hydroxy-2,3,4,5-tetrahydrodipicolinate + NADPH + H(+). It functions in the pathway amino-acid biosynthesis; L-lysine biosynthesis via DAP pathway; (S)-tetrahydrodipicolinate from L-aspartate: step 4/4. Its function is as follows. Catalyzes the conversion of 4-hydroxy-tetrahydrodipicolinate (HTPA) to tetrahydrodipicolinate. In Staphylococcus aureus (strain JH1), this protein is 4-hydroxy-tetrahydrodipicolinate reductase.